We begin with the raw amino-acid sequence, 669 residues long: Acyl-coenzyme A oxidase 1 (669 aa).

The FAD site is built by Thr152 and Gly191. Glu434 (proton acceptor) is an active-site residue. A Phosphotyrosine modification is found at Tyr544. Ser551 carries the phosphoserine modification. Positions 667–669 (AHL) match the Microbody targeting signal motif.

This sequence belongs to the acyl-CoA oxidase family. As to quaternary structure, homodimer. FAD is required as a cofactor. As to expression, expressed in glia.

It localises to the peroxisome. The protein localises to the nucleus. It carries out the reaction a 2,3-saturated acyl-CoA + O2 = a (2E)-enoyl-CoA + H2O2. Its pathway is lipid metabolism; peroxisomal fatty acid beta-oxidation. In terms of biological role, catalyzes the desaturation of acyl-CoAs to 2-trans-enoyl-CoAs. First enzyme of the fatty acid beta-oxidation pathway. The polypeptide is Acyl-coenzyme A oxidase 1 (Drosophila melanogaster (Fruit fly)).